The following is a 551-amino-acid chain: Putative transport protein CGSHiGG_02670 (551 aa).

The next 5 helical transmembrane spans lie at 4-24 (IAIT…IGHW), 28-48 (GVGL…HFTN), 65-85 (FGLI…FFSS), 95-115 (AFAI…HKIA), and 157-177 (VSYA…MWLI). 2 consecutive RCK C-terminal domains span residues 191-275 (RFNA…IIGH) and 277-360 (VDAP…VIGN). The next 6 helical transmembrane spans lie at 370–390 (MLPV…PFYI), 402–424 (AGGP…LYWF), 438–458 (IVLF…DTLV), 463–483 (LEWM…VGTI), 492–512 (YLTI…LAFA), and 529–549 (VYPL…VLLW).

It belongs to the AAE transporter (TC 2.A.81) family. YidE subfamily.

It is found in the cell membrane. This chain is Putative transport protein CGSHiGG_02670, found in Haemophilus influenzae (strain PittGG).